Consider the following 984-residue polypeptide: DNA polymerase (984 aa).

Positions 804–827 (DNPGKKRKSTDDNEGPSPKRRVIT) are bipartite nuclear localization signal. The monopartite nuclear localization signal stretch occupies residues 939-948 (CSVKRKRDDD). The disordered stretch occupies residues 943-969 (RKRDDDDDNDDDDDDDCDSSDSENDTQ). Residues 947 to 966 (DDDDNDDDDDDDCDSSDSEN) are compositionally biased toward acidic residues.

Belongs to the DNA polymerase type-B family.

The protein resides in the host nucleus. It catalyses the reaction DNA(n) + a 2'-deoxyribonucleoside 5'-triphosphate = DNA(n+1) + diphosphate. Replicates the viral genome, host DNA polymerases cannot substitute for the viral enzyme in this process. This chain is DNA polymerase (POL), found in Autographa californica nuclear polyhedrosis virus (AcMNPV).